The sequence spans 741 residues: Prestin (741 aa).

Residues 1–79 (MDHVEETEIL…WLPAYRFKEY (79 aa)) are Cytoplasmic-facing. The chain crosses the membrane as a helical span at residues 80–105 (VLGDIVSGISTGVLQLPQGLAFAMLA). Residues 106–109 (AVPP) are Extracellular-facing. The helical transmembrane segment at 110 to 125 (VFGLYSSFYPVIMYCF) threads the bilayer. Residues 126 to 137 (FGTSRHISIGPF) are Cytoplasmic-facing. A helical transmembrane segment spans residues 138–147 (AVISLMIGGV). Residues 148-178 (AVRLVPDDIVIPGGVNATNSTEARDALRVKV) are Extracellular-facing. The short motif at 158–168 (IPGGVNATNST) is the Involved in motor function element. N-linked (GlcNAc...) asparagine glycans are attached at residues asparagine 163 and asparagine 166. A run of 2 helical transmembrane segments spans residues 179-208 (AMSVTLLTGIIQFCLGVCRFGFVAIYLTEP) and 209-230 (LVRGFTTAAAVHVFTSMLKYLF). The Extracellular segment spans residues 231-243 (GVKTKRYSGIFSV). Positions 244-248 (VYSTV) form an intramembrane region, helical. Over 249 to 261 (AVLQNVKNLNVCS) the chain is Extracellular. The chain crosses the membrane as a helical span at residues 262-283 (LGVGLMVFGLLLGGKEFNERFK). Over 284–291 (EKLPAPIP) the chain is Cytoplasmic. The chain crosses the membrane as a helical span at residues 292-303 (LEFFAVVMGTGI). Topologically, residues 304 to 338 (SAGFSLHESYNVDVVGTLPLGLLPPANPDTSLFHL) are extracellular. Residues 339–361 (VYVDAIAIAIVGFSVTISMAKTL) form a helical membrane-spanning segment. Residues 362–370 (ANKHGYQVD) are Cytoplasmic-facing. Residues 371-388 (GNQELIALGLCNSTGSLF) form a helical membrane-spanning segment. At 389–396 (QTFAISCS) the chain is on the extracellular side. Residues 397–406 (LSRSLVQEGT) traverse the membrane as a helical segment. Serine 398 contacts salicylate. The Cytoplasmic segment spans residues 407 to 410 (GGKT). Residues 411-429 (QLAGCLASLMILLVILATG) traverse the membrane as a helical segment. Residues 430-436 (FLFESLP) lie on the Extracellular side of the membrane. The chain crosses the membrane as a helical span at residues 437–459 (QAVLSAIVIVNLKGMFMQFSDLP). Over 460–467 (FFWRTSKI) the chain is Cytoplasmic. A helical transmembrane segment spans residues 468–483 (ELTIWLTTFVSSLFLG). Position 484 (leucine 484) is a topological domain, extracellular. The chain crosses the membrane as a helical span at residues 485–498 (DYGLITAVIIALMT). Over 499 to 741 (VIYRTQSPSY…DSEPNATPEA (243 aa)) the chain is Cytoplasmic. The extended region for STAS domain stretch occupies residues 505 to 718 (SPSYIVLGQL…AVLGSQVREA (214 aa)). An STAS domain is found at 525 to 713 (AYEEVKEVPG…HSIHDAVLGS (189 aa)). A disordered region spans residues 718–741 (ALAEQEATAAPPQEDSEPNATPEA). Low complexity predominate over residues 721–730 (EQEATAAPPQ).

Belongs to the SLC26A/SulP transporter (TC 2.A.53) family. Homodimer. Interacts (via STAS domain) with CALM; this interaction is calcium-dependent and the STAS domain interacts with only one lobe of CALM which is an elongated conformation.

The protein resides in the cell membrane. The enzyme catalyses 2 hydrogencarbonate(in) + chloride(out) = 2 hydrogencarbonate(out) + chloride(in). Functionally, voltage-sensitive motor protein that drives outer hair cell (OHC) electromotility (eM) and participates in sound amplification in the hearing organ. Converts changes in the transmembrane electric potential into mechanical displacements resulting in the coupling of its expansion to movement of a charged voltage sensor across the lipid membrane. The nature of the voltage sensor is not completely clear, and two models compete. In the first model, acts as an incomplete transporter where intracellular chloride anion acts as extrinsic voltage sensor that drives conformational change in the protein which is sufficient to produce a length change in the plane of the membrane and hence in the length of the OHC. The second model in which multiple charged amino acid residues are distributed at the intracellular and extracellular membrane interfaces that form an intrinsic voltage sensor, whose movement produces the non-linear capacitance (NLC). However, the effective voltage sensor may be the result of a hybrid voltage sensor assembled from intrinsic charge (charged residues) and extrinsic charge (bound anion). Notably, binding of anions to the anion-binding pocket partially neutralizes the intrinsic positive charge rather than to form an electrically negative sensor, therefore remaining charge may serve as voltage sensor that, after depolarization, moves from down (expanded state) to up (contracted) conformation, which is accompanied by an eccentric contraction of the intermembrane cross-sectional area of the protein as well as a major increase in the hydrophobic thickness of the protein having as consequences the plasma membrane thickening and the cell contraction after membrane depolarization. The anion-binding pocket transits from the inward-open (Down) state, where it is exposed toward the intracellular solvent in the absence of anion, to the occluded (Up) state upon anion binding. Salicylate competes for the anion-binding site and inhibits the voltage-sensor movement, and therefore inhibits the charge transfer and electromotility by displacing Cl(-) from the anion-binding site and by preventing the structural transitions to the contracted state. In addition, can act as a weak Cl(-)/HCO3 (-) antiporter across the cell membrane and so regulate the intracellular pH of the outer hair cells (OHCs), while firstly found as being unable to mediate electrogenic anion transport. Moreover, supports a role in cardiac mechanical amplification serving as an elastic element to enhance the actomyosin- based sarcomere contraction system. The chain is Prestin from Tursiops truncatus (Atlantic bottle-nosed dolphin).